The chain runs to 460 residues: UDP-N-acetylmuramoylalanine--D-glutamate ligase (460 aa).

Residue 120 to 126 coordinates ATP; the sequence is GSNGKTT.

This sequence belongs to the MurCDEF family.

The protein localises to the cytoplasm. It carries out the reaction UDP-N-acetyl-alpha-D-muramoyl-L-alanine + D-glutamate + ATP = UDP-N-acetyl-alpha-D-muramoyl-L-alanyl-D-glutamate + ADP + phosphate + H(+). It functions in the pathway cell wall biogenesis; peptidoglycan biosynthesis. In terms of biological role, cell wall formation. Catalyzes the addition of glutamate to the nucleotide precursor UDP-N-acetylmuramoyl-L-alanine (UMA). This is UDP-N-acetylmuramoylalanine--D-glutamate ligase from Lactobacillus johnsonii (strain CNCM I-12250 / La1 / NCC 533).